Reading from the N-terminus, the 392-residue chain is Early estrogen-induced gene 1 protein (392 aa).

The 144-residue stretch at 2–145 folds into the C2 NT-type domain; the sequence is AFLMKKKKFK…ILKVTIGMFL (144 aa). Residues 129 to 138 form a required for interaction with TNFRSF11A/RANK region; that stretch reads NTRQDNSILK. The interval 173–324 is disordered; the sequence is LTCKGGGTSS…RKKDSVESHP (152 aa). Residues 183-194 are compositionally biased toward low complexity; that stretch reads GGSSSTNSLTGS. Polar residues predominate over residues 228-255; that stretch reads SRNSSYASQQSKLSGYSTEHSRSSSLSD. Positions 262-273 are enriched in low complexity; that stretch reads TSTSSSASGGLS. 2 stretches are compositionally biased toward basic and acidic residues: residues 281 to 300 and 307 to 324; these read GMER…EKPP and HLSD…ESHP.

It belongs to the EEIG family. In terms of assembly, part of a complex composed of EEIG1, TNFRSF11A/RANK, PLCG2, GAB2, TEC and BTK; complex formation increases in the presence of TNFSF11/RANKL. Interacts with PRDM1/BLIMP1; following TNFSF11/RANKL stimulation in bone marrow-derived macrophages, the interaction promotes the binding of PRDM1/BLIMP1 to the gene promoter of IRF8. Interacts (via N-terminus) with TNFRSF11A/RANK (via cytoplasmic domain); when in the presence of TNFSF11/RANKL. As to expression, expressed during TNFSF11/RANKL-induced differentiation of bone marrow-derived macrophages to osteoclasts.

It localises to the nucleus. The protein localises to the cytoplasm. It is found in the membrane raft. Its function is as follows. Key component of TNFSF11/RANKL- and TNF-induced osteoclastogenesis pathways, thereby mediates bone resorption in pathological bone loss conditions. Required for TNFSF11/RANKL-induced osteoclastogenesis via its interaction with TNFRSF11A/RANK, thereby facilitates the downsteam transcription of NFATC1 and activation of PLCG2. Facilitates recruitment of the transcriptional repressor PRDM1/BLIMP1 to the promoter of the anti-osteoclastogenesis gene IRF8, thereby resulting in transcription of osteoclast differentiation factors. May play a role in estrogen action. The protein is Early estrogen-induced gene 1 protein (Eeig1) of Mus musculus (Mouse).